A 131-amino-acid chain; its full sequence is uncharacterized protein (131 aa).

A compositionally biased stretch (low complexity) spans 31 to 40; that stretch reads AAATSRAAPL. The interval 31–131 is disordered; it reads AAATSRAAPL…EAKTEQTKTP (101 aa).

This is an uncharacterized protein from Homo sapiens (Human).